The sequence spans 310 residues: uncharacterized protein (310 aa).

This is an uncharacterized protein from Archaeoglobus fulgidus (strain ATCC 49558 / DSM 4304 / JCM 9628 / NBRC 100126 / VC-16).